A 506-amino-acid chain; its full sequence is Sugar transport protein 5 (506 aa).

Residues 1–19 (MAGGGLALDVSSAGNIDAK) are Cytoplasmic-facing. 12 helical membrane-spanning segments follow: residues 20–40 (ITAA…IFGY), 81–101 (LLTA…LVAS), 117–137 (GFTF…AMLI), 141–161 (ILLG…LSEV), 168–188 (GAFN…ANLI), 201–221 (ISLG…LFIS), 287–307 (LVVA…VNAF), 325–345 (IATF…TMVI), 352–372 (FLFI…AVLL), 390–410 (VTVV…WGPL), 430–450 (LSVA…LATL), and 456–476 (GAFL…IMFL). The Cytoplasmic segment spans residues 477 to 506 (PETKGIPVDSMYQVWEKHWYWQRFTKPTST).

It belongs to the major facilitator superfamily. Sugar transporter (TC 2.A.1.1) family.

Its subcellular location is the membrane. Its function is as follows. Mediates an active uptake of hexoses, probably by sugar/hydrogen symport. The protein is Sugar transport protein 5 (STP5) of Arabidopsis thaliana (Mouse-ear cress).